The sequence spans 362 residues: 3-dehydroquinate synthase (362 aa).

Residues 72–77 (SGEEAK), 106–110 (GVTGD), 130–131 (TT), Lys-142, and Lys-151 each bind NAD(+). 3 residues coordinate Zn(2+): Glu-184, His-246, and His-263.

The protein belongs to the sugar phosphate cyclases superfamily. Dehydroquinate synthase family. It depends on Co(2+) as a cofactor. Requires Zn(2+) as cofactor. NAD(+) is required as a cofactor.

Its subcellular location is the cytoplasm. It catalyses the reaction 7-phospho-2-dehydro-3-deoxy-D-arabino-heptonate = 3-dehydroquinate + phosphate. Its pathway is metabolic intermediate biosynthesis; chorismate biosynthesis; chorismate from D-erythrose 4-phosphate and phosphoenolpyruvate: step 2/7. Functionally, catalyzes the conversion of 3-deoxy-D-arabino-heptulosonate 7-phosphate (DAHP) to dehydroquinate (DHQ). This Bacillus velezensis (strain DSM 23117 / BGSC 10A6 / LMG 26770 / FZB42) (Bacillus amyloliquefaciens subsp. plantarum) protein is 3-dehydroquinate synthase.